We begin with the raw amino-acid sequence, 205 residues long: Latherin (205 aa).

The cysteines at positions 133 and 176 are disulfide-linked.

It belongs to the BPI/LBP/Plunc superfamily. Plunc family. Monomer.

It is found in the secreted. Major protein in sweat, has surfactant properties. This is Latherin (LATH) from Equus quagga burchellii (Burchell's zebra).